A 100-amino-acid polypeptide reads, in one-letter code: ATP-dependent Clp protease adapter protein ClpS (100 aa).

This sequence belongs to the ClpS family. As to quaternary structure, binds to the N-terminal domain of the chaperone ClpA.

Functionally, involved in the modulation of the specificity of the ClpAP-mediated ATP-dependent protein degradation. In Neisseria meningitidis serogroup B (strain ATCC BAA-335 / MC58), this protein is ATP-dependent Clp protease adapter protein ClpS.